The sequence spans 414 residues: Glutamyl-tRNA reductase (414 aa).

Substrate contacts are provided by residues 51–54 (TCNR), serine 107, 112–114 (EYE), and glutamine 118. The active-site Nucleophile is cysteine 52. 187 to 192 (GAGEIG) contacts NADP(+).

The protein belongs to the glutamyl-tRNA reductase family. In terms of assembly, homodimer.

It carries out the reaction (S)-4-amino-5-oxopentanoate + tRNA(Glu) + NADP(+) = L-glutamyl-tRNA(Glu) + NADPH + H(+). It functions in the pathway porphyrin-containing compound metabolism; protoporphyrin-IX biosynthesis; 5-aminolevulinate from L-glutamyl-tRNA(Glu): step 1/2. Its function is as follows. Catalyzes the NADPH-dependent reduction of glutamyl-tRNA(Glu) to glutamate 1-semialdehyde (GSA). The chain is Glutamyl-tRNA reductase from Sulfolobus acidocaldarius (strain ATCC 33909 / DSM 639 / JCM 8929 / NBRC 15157 / NCIMB 11770).